The primary structure comprises 142 residues: Hemoglobin subunit alpha (142 aa).

The Globin domain maps to 2-142 (VLSPADKTNV…VSTVLTSKYR (141 aa)). Ser4 bears the Phosphoserine mark. Lys8 carries the N6-succinyllysine modification. Residue Thr9 is modified to Phosphothreonine. Lys12 is subject to N6-succinyllysine. N6-acetyllysine; alternate is present on Lys17. Lys17 carries the post-translational modification N6-succinyllysine; alternate. Tyr25 bears the Phosphotyrosine mark. At Ser36 the chain carries Phosphoserine. Lys41 is modified (N6-succinyllysine). At Ser50 the chain carries Phosphoserine. His59 lines the O2 pocket. A heme b-binding site is contributed by His88. Position 103 is a phosphoserine (Ser103). Thr109 carries the phosphothreonine modification. 2 positions are modified to phosphoserine: Ser125 and Ser132. 2 positions are modified to phosphothreonine: Thr135 and Thr138. Ser139 carries the post-translational modification Phosphoserine.

This sequence belongs to the globin family. As to quaternary structure, heterotetramer of two alpha chains and two beta chains in adult hemoglobin A (HbA); two alpha chains and two delta chains in adult hemoglobin A2 (HbA2); two alpha chains and two epsilon chains in early embryonic hemoglobin Gower-2; two alpha chains and two gamma chains in fetal hemoglobin F (HbF). In terms of tissue distribution, red blood cells.

Its function is as follows. Involved in oxygen transport from the lung to the various peripheral tissues. Functionally, hemopressin acts as an antagonist peptide of the cannabinoid receptor CNR1. Hemopressin-binding efficiently blocks cannabinoid receptor CNR1 and subsequent signaling. This is Hemoglobin subunit alpha (HBA1) from Pan paniscus (Pygmy chimpanzee).